The chain runs to 252 residues: Imidazole glycerol phosphate synthase subunit HisF (252 aa).

Catalysis depends on residues Asp-11 and Asp-130.

It belongs to the HisA/HisF family. Heterodimer of HisH and HisF.

Its subcellular location is the cytoplasm. It carries out the reaction 5-[(5-phospho-1-deoxy-D-ribulos-1-ylimino)methylamino]-1-(5-phospho-beta-D-ribosyl)imidazole-4-carboxamide + L-glutamine = D-erythro-1-(imidazol-4-yl)glycerol 3-phosphate + 5-amino-1-(5-phospho-beta-D-ribosyl)imidazole-4-carboxamide + L-glutamate + H(+). The protein operates within amino-acid biosynthesis; L-histidine biosynthesis; L-histidine from 5-phospho-alpha-D-ribose 1-diphosphate: step 5/9. In terms of biological role, IGPS catalyzes the conversion of PRFAR and glutamine to IGP, AICAR and glutamate. The HisF subunit catalyzes the cyclization activity that produces IGP and AICAR from PRFAR using the ammonia provided by the HisH subunit. The sequence is that of Imidazole glycerol phosphate synthase subunit HisF from Bacillus pumilus (strain SAFR-032).